The primary structure comprises 117 residues: Large ribosomal subunit protein uL18 (117 aa).

This sequence belongs to the universal ribosomal protein uL18 family. As to quaternary structure, part of the 50S ribosomal subunit; part of the 5S rRNA/L5/L18/L25 subcomplex. Contacts the 5S and 23S rRNAs.

Its function is as follows. This is one of the proteins that bind and probably mediate the attachment of the 5S RNA into the large ribosomal subunit, where it forms part of the central protuberance. This is Large ribosomal subunit protein uL18 from Pectobacterium carotovorum subsp. carotovorum (strain PC1).